Reading from the N-terminus, the 426-residue chain is Histidine--tRNA ligase (426 aa).

Belongs to the class-II aminoacyl-tRNA synthetase family. In terms of assembly, homodimer.

It localises to the cytoplasm. The catalysed reaction is tRNA(His) + L-histidine + ATP = L-histidyl-tRNA(His) + AMP + diphosphate + H(+). The protein is Histidine--tRNA ligase of Streptococcus equi subsp. zooepidemicus (strain MGCS10565).